The primary structure comprises 294 residues: Small ribosomal subunit protein uS2 (294 aa).

The interval 232–294 (RATGTTEAPE…SAAGEADAAK (63 aa)) is disordered. Over residues 246–259 (EWERELLEGSKSEE) the composition is skewed to basic and acidic residues. Over residues 260–294 (AAAPAAAEEAPAAAEEAPAAAEATESAAGEADAAK) the composition is skewed to low complexity.

The protein belongs to the universal ribosomal protein uS2 family.

In Arthrobacter sp. (strain FB24), this protein is Small ribosomal subunit protein uS2.